We begin with the raw amino-acid sequence, 204 residues long: LexA repressor (204 aa).

A DNA-binding region (H-T-H motif) is located at residues 28–48 (RAEIAQELGFKSPNAAEEHLK). Catalysis depends on for autocatalytic cleavage activity residues serine 125 and lysine 162.

This sequence belongs to the peptidase S24 family. As to quaternary structure, homodimer.

The enzyme catalyses Hydrolysis of Ala-|-Gly bond in repressor LexA.. Represses a number of genes involved in the response to DNA damage (SOS response), including recA and lexA. In the presence of single-stranded DNA, RecA interacts with LexA causing an autocatalytic cleavage which disrupts the DNA-binding part of LexA, leading to derepression of the SOS regulon and eventually DNA repair. The polypeptide is LexA repressor (Pseudomonas aeruginosa (strain LESB58)).